The chain runs to 244 residues: Carbonyl reductase [NADPH] 2 (244 aa).

L11 to R39 serves as a coordination point for NADP(+). Residue S42 is modified to Phosphoserine. A substrate-binding site is contributed by S136. Y149 (proton acceptor) is an active-site residue. Phosphoserine is present on S176.

The protein belongs to the short-chain dehydrogenases/reductases (SDR) family. Homotetramer. As to expression, predominantly expressed in lung, in ciliated cells, non-ciliated bronchiolar cells and type-II alveolar pneumocytes. Also detected in adipose tissue (at protein level). Low expression in testis, heart, kidney, spleen, brain and liver.

The protein localises to the mitochondrion matrix. The enzyme catalyses a secondary alcohol + NADP(+) = a ketone + NADPH + H(+). May function in the pulmonary metabolism of endogenous carbonyl compounds, such as aliphatic aldehydes and ketones derived from lipid peroxidation, 3-ketosteroids and fatty aldehydes, as well as in xenobiotic metabolism. This chain is Carbonyl reductase [NADPH] 2 (Cbr2), found in Mus musculus (Mouse).